The primary structure comprises 542 residues: GMP synthase [glutamine-hydrolyzing] (542 aa).

In terms of domain architecture, Glutamine amidotransferase type-1 spans 28–218 (MLVILDFGSQ…VYHICQCEPT (191 aa)). The Nucleophile role is filled by Cys-105. Residues His-192 and Glu-194 contribute to the active site. The 199-residue stretch at 219–417 (WTTEAFVEES…IGLPEEIVRR (199 aa)) folds into the GMPS ATP-PPase domain. Residue 246–252 (SGGVDSS) coordinates ATP.

As to quaternary structure, homodimer.

It carries out the reaction XMP + L-glutamine + ATP + H2O = GMP + L-glutamate + AMP + diphosphate + 2 H(+). Its pathway is purine metabolism; GMP biosynthesis; GMP from XMP (L-Gln route): step 1/1. Catalyzes the synthesis of GMP from XMP. This is GMP synthase [glutamine-hydrolyzing] from Rippkaea orientalis (strain PCC 8801 / RF-1) (Cyanothece sp. (strain PCC 8801)).